The chain runs to 415 residues: Dynein assembly factor with WD repeat domains 1 (415 aa).

8 WD repeats span residues 90 to 129, 132 to 174, 175 to 214, 217 to 256, 259 to 298, 301 to 340, 343 to 384, and 386 to 415; these read AHILPLTNVALNKSGSCFITGSYDRTCKLWDTASGEELNT, GHRN…HTFR, GHTAEIVCLSFNPQSTLVATGSMDTTAKLWDIQNGEEVYT, GHSAEIISLSFNTSGDRIITGSFDHTVVVWDADTGRKVNI, GHCAEISSASFNWDCSLILTGSMDKTCKLWDATNGKCVAT, GHDDEILDSCFDYTGKLIATASADGTARIFSAATRKCIAK, GHEG…QVLE, and HTDEIFSCAFNYKGNIVITGSKDNTCRIWR.

This sequence belongs to the WD repeat WDR69 family. As to quaternary structure, interacts with IFT46.

It is found in the cytoplasm. The protein localises to the cytoskeleton. Its subcellular location is the flagellum basal body. The protein resides in the flagellum axoneme. Required for axonemal dynein assembly and ciliary motility in ciliated organs, including Kupffer's vesicle, during embryogenesis. Facilitates the onset of robust cilia motility during development. The chain is Dynein assembly factor with WD repeat domains 1 from Homo sapiens (Human).